Reading from the N-terminus, the 374-residue chain is UDP-N-acetylglucosamine--N-acetylmuramyl-(pentapeptide) pyrophosphoryl-undecaprenol N-acetylglucosamine transferase (374 aa).

UDP-N-acetyl-alpha-D-glucosamine-binding positions include T13–G15, N124, R165, S193, and Q294.

Belongs to the glycosyltransferase 28 family. MurG subfamily.

It is found in the cell inner membrane. It catalyses the reaction di-trans,octa-cis-undecaprenyl diphospho-N-acetyl-alpha-D-muramoyl-L-alanyl-D-glutamyl-meso-2,6-diaminopimeloyl-D-alanyl-D-alanine + UDP-N-acetyl-alpha-D-glucosamine = di-trans,octa-cis-undecaprenyl diphospho-[N-acetyl-alpha-D-glucosaminyl-(1-&gt;4)]-N-acetyl-alpha-D-muramoyl-L-alanyl-D-glutamyl-meso-2,6-diaminopimeloyl-D-alanyl-D-alanine + UDP + H(+). The protein operates within cell wall biogenesis; peptidoglycan biosynthesis. In terms of biological role, cell wall formation. Catalyzes the transfer of a GlcNAc subunit on undecaprenyl-pyrophosphoryl-MurNAc-pentapeptide (lipid intermediate I) to form undecaprenyl-pyrophosphoryl-MurNAc-(pentapeptide)GlcNAc (lipid intermediate II). This chain is UDP-N-acetylglucosamine--N-acetylmuramyl-(pentapeptide) pyrophosphoryl-undecaprenol N-acetylglucosamine transferase, found in Rhizobium meliloti (strain 1021) (Ensifer meliloti).